A 229-amino-acid chain; its full sequence is Claudin-25 (229 aa).

Residues 1–10 are Cytoplasmic-facing; that stretch reads MAWSFRAKVQ. The helical transmembrane segment at 11–31 threads the bilayer; it reads LGGLLLSLLGWVCSCVTTILP. Topologically, residues 32 to 81 are extracellular; sequence QWKTLNLELNEMETWIMGIWEVCVDREEVATVCKAFESFLSLPQELQVAR. Residues 82–102 form a helical membrane-spanning segment; sequence ILMVASHGLGLLGLLLCSFGS. The Cytoplasmic portion of the chain corresponds to 103-124; it reads ECFQFHRIRWVFKRRLGLLGRT. The chain crosses the membrane as a helical span at residues 125 to 145; it reads LEASASATTLLPVSWVAHATI. At 146–164 the chain is on the extracellular side; it reads QDFWDDSIPDIIPRWEFGG. Residues 165-185 traverse the membrane as a helical segment; sequence ALYLGWAAGIFLALGGLLLIF. At 186-229 the chain is on the cytoplasmic side; sequence SACLGKEDVPFPLMAGPTVPLSCAPVEESDGSFHLMLRPRNLVI.

It belongs to the claudin family.

It is found in the cell junction. It localises to the tight junction. The protein resides in the cell membrane. Its function is as follows. Plays a major role in tight junction-specific obliteration of the intercellular space, through calcium-independent cell-adhesion activity. This chain is Claudin-25 (CLDN25), found in Homo sapiens (Human).